The following is a 146-amino-acid chain: Transcriptional regulator MraZ (146 aa).

SpoVT-AbrB domains are found at residues 5-51 (NHPT…PLQE) and 80-123 (GQMV…NHEA).

The protein belongs to the MraZ family. In terms of assembly, forms oligomers.

The protein localises to the cytoplasm. It is found in the nucleoid. The chain is Transcriptional regulator MraZ from Acidobacterium capsulatum (strain ATCC 51196 / DSM 11244 / BCRC 80197 / JCM 7670 / NBRC 15755 / NCIMB 13165 / 161).